The primary structure comprises 255 residues: Small ribosomal subunit protein eS1 (255 aa).

A2 carries the N-acetylalanine; partial modification.

Belongs to the eukaryotic ribosomal protein eS1 family. In terms of assembly, component of the small ribosomal subunit. Mature ribosomes consist of a small (40S) and a large (60S) subunit. The 40S subunit contains about 33 different proteins and 1 molecule of RNA (18S). The 60S subunit contains about 49 different proteins and 3 molecules of RNA (25S, 5.8S and 5S).

The protein resides in the cytoplasm. This Pyrenophora tritici-repentis (strain Pt-1C-BFP) (Wheat tan spot fungus) protein is Small ribosomal subunit protein eS1 (rps1).